A 621-amino-acid polypeptide reads, in one-letter code: Type 2 DNA topoisomerase 6 subunit B (621 aa).

Residues Asn-48, Asp-80, 101–102, 111–118, and Lys-435 each bind ATP; these read SR and GQQGIGIS.

The protein belongs to the TOP6B family. As to quaternary structure, homodimer. Heterotetramer of two Top6A and two Top6B chains.

It catalyses the reaction ATP-dependent breakage, passage and rejoining of double-stranded DNA.. In terms of biological role, relaxes both positive and negative superturns and exhibits a strong decatenase activity. The sequence is that of Type 2 DNA topoisomerase 6 subunit B from Methanosarcina mazei (strain ATCC BAA-159 / DSM 3647 / Goe1 / Go1 / JCM 11833 / OCM 88) (Methanosarcina frisia).